The chain runs to 401 residues: Pleckstrin homology-like domain family A member 1 (401 aa).

Disordered stretches follow at residues 39-67, 190-222, and 293-401; these read IQKRREGARPVPFSERSQEDGRGPAARSS, QQQQQQQQQQQQQQQPGQGPAEPSQPSGPAVAS, and KSTR…SNSA. A PH domain is found at 151–283; that stretch reads LKEGVLEKRS…AEITLQMVQY (133 aa). Residues 190 to 204 show a composition bias toward low complexity; sequence QQQQQQQQQQQQQQQ. Residues 308–344 are compositionally biased toward pro residues; that stretch reads PSQPQPQPQLQPQPQPQPQPQPQPQSQPQPQPQPKPQ. The segment at 311–346 is 15 X 2 AA repeats of P-Q; sequence PQPQPQLQPQPQPQPQPQPQPQSQPQPQPQPKPQPQ. The span at 352–378 shows a compositional bias: basic residues; it reads PHPHPHPHSHPHSHPHPHPHPHPHQIP. The tract at residues 352 to 389 is 14 X 2 AA repeats of P-H; that stretch reads PHPHPHPHSHPHSHPHPHPHPHPHQIPHPHPQPHSQPH.

As to quaternary structure, interacts with RPL14, EIF3S7 and PABPC4. Widely expressed with highest levels in pancreas. Strongly expressed by benign melanocytic nevi, and progressively reduced expressed in primary and metastatic melanomas (at protein level).

The protein resides in the cytoplasm. It is found in the cytoplasmic vesicle. Its subcellular location is the nucleus. It localises to the nucleolus. In terms of biological role, seems to be involved in regulation of apoptosis. May be involved in detachment-mediated programmed cell death. May mediate apoptosis during neuronal development. May be involved in regulation of anti-apoptotic effects of IGF1. May be involved in translational regulation. In Homo sapiens (Human), this protein is Pleckstrin homology-like domain family A member 1 (PHLDA1).